Reading from the N-terminus, the 248-residue chain is Gas vesicle protein J (248 aa).

A 1; truncated repeat occupies 121-140 (DVKDDLYQTSAKIPSPVDTP). The segment at 121-245 (DVKDDLYQTS…EEIPSSVDPA (125 aa)) is 6 X 21 AA approximate tandem repeats. Repeat copies occupy residues 141-161 (IEVL…VNTS), 162-182 (MEIL…VGST), 183-203 (VEIL…VVST), 204-224 (VEIL…VGST), and 225-245 (VEIL…VDPA).

Belongs to the gas vesicle GvpA family. Interacts with GvpA.

It is found in the gas vesicle. A minor component of the gas vesicle, might be involved in nucleating gas vesicle formation. Gas vesicles (GV) are hollow, gas filled proteinaceous nanostructures. During planktonic growth they allow positioning of the organism at a favorable depth for light or nutrient acquisition. The polypeptide is Gas vesicle protein J (Dolichospermum flosaquae (Anabaena flos-aquae)).